The primary structure comprises 662 residues: Retaining alpha-galactosidase (662 aa).

Positions 1–19 are cleaved as a signal peptide; it reads MKKLTFLLLCVLCTLSLQA. Residue Glu174 coordinates Ca(2+). The active-site Nucleophile is the Asp415. Ca(2+) is bound by residues Glu464 and Glu470. Catalysis depends on Glu470, which acts as the Proton donor/acceptor.

Belongs to the glycosyl hydrolase 97 family. As to quaternary structure, monomer. Ca(2+) is required as a cofactor.

The enzyme catalyses Hydrolysis of terminal, non-reducing alpha-D-galactose residues in alpha-D-galactosides, including galactose oligosaccharides, galactomannans and galactolipids.. With respect to regulation, inhibited by EDTA in vitro. Galactosidase that is able to hydrolyze the alpha-1,6 disaccharide melibiose and the synthetic p-nitrophenyl alpha-galactoside substrate (pNP-Gal), with retention of the anomeric configuration. Does not hydrolyze DNP-Glc or pNP-Glc. In Bacteroides thetaiotaomicron (strain ATCC 29148 / DSM 2079 / JCM 5827 / CCUG 10774 / NCTC 10582 / VPI-5482 / E50), this protein is Retaining alpha-galactosidase.